A 511-amino-acid polypeptide reads, in one-letter code: Cobyric acid synthase (511 aa).

The GATase cobBQ-type domain occupies 251–443; that stretch reads LLDIAIICLP…IHGIFDNDIF (193 aa). C332 serves as the catalytic Nucleophile. Residue H435 is part of the active site.

Belongs to the CobB/CobQ family. CobQ subfamily.

It participates in cofactor biosynthesis; adenosylcobalamin biosynthesis. Its function is as follows. Catalyzes amidations at positions B, D, E, and G on adenosylcobyrinic A,C-diamide. NH(2) groups are provided by glutamine, and one molecule of ATP is hydrogenolyzed for each amidation. The chain is Cobyric acid synthase from Listeria welshimeri serovar 6b (strain ATCC 35897 / DSM 20650 / CCUG 15529 / CIP 8149 / NCTC 11857 / SLCC 5334 / V8).